The following is a 56-amino-acid chain: Small ribosomal subunit protein uS14 (56 aa).

Residues cysteine 21, cysteine 24, cysteine 39, and cysteine 42 each contribute to the Zn(2+) site.

Belongs to the universal ribosomal protein uS14 family. Zn(2+) is required as a cofactor.

The chain is Small ribosomal subunit protein uS14 (RPS29) from Debaryomyces hansenii (strain ATCC 36239 / CBS 767 / BCRC 21394 / JCM 1990 / NBRC 0083 / IGC 2968) (Yeast).